A 298-amino-acid chain; its full sequence is Syntaxin-4 (298 aa).

Over 1-274 the chain is Cytoplasmic; the sequence is MRDRTHELRQ…NQKKARKKKV (274 aa). A phosphoserine mark is found at Ser15, Ser29, Ser36, Ser117, Ser208, and Ser248. Residues 38 to 163 adopt a coiled-coil conformation; the sequence is DDEFFQKVQT…ERIRRQLKIT (126 aa). The segment at 154–298 is interaction with CENPF; it reads ERIRRQLKIT…VIIGITITVG (145 aa). The 63-residue stretch at 200 to 262 folds into the t-SNARE coiled-coil homology domain; it reads LNEISARHSE…ERGQEHVKIA (63 aa). Residues 275–295 form a helical; Anchor for type IV membrane protein membrane-spanning segment; sequence MIAICVSVTVLILAVIIGITI. Residues 296-298 are Extracellular-facing; sequence TVG.

Belongs to the syntaxin family. As to quaternary structure, interacts with STXBP6. Component of the SNARE complex composed of STX4, SNAP23 and VAMP7 that interacts with SYT7 during lysosomal exocytosis. Found in a complex with VAMP8 and SNAP23. Detected in a complex with SNAP23 and STXBP4. Interacts with VAMP2. Interacts with SNAP23 and SNAPIN. Interacts with LLGL1. Interacts (via C-terminus) with CENPF. Interacts with DOC2B. Interacts with STXBP3; excludes interaction with DOC2B and SNAP25. Interacts with STXBP4; excludes interaction with VAMP2. Interacts with STXBP5L. Expressed in the outer and inner hair cells of the cochlea.

The protein localises to the cell membrane. The protein resides in the cell projection. Its subcellular location is the neuron projection. It localises to the stereocilium. Functionally, plasma membrane t-SNARE that mediates docking of transport vesicles. Necessary for the translocation of SLC2A4 from intracellular vesicles to the plasma membrane. In neurons, recruited at neurite tips to membrane domains rich in the phospholipid 1-oleoyl-2-palmitoyl-PC (OPPC) which promotes neurite tip surface expression of the dopamine transporter SLC6A3/DAT by facilitating fusion of SLC6A3-containing transport vesicles with the plasma membrane. Together with STXB3 and VAMP2, may also play a role in docking/fusion of intracellular GLUT4-containing vesicles with the cell surface in adipocytes and in docking of synaptic vesicles at presynaptic active zones. Required for normal hearing. The polypeptide is Syntaxin-4 (Stx4) (Mus musculus (Mouse)).